Reading from the N-terminus, the 398-residue chain is L-rhamnonate dehydratase (398 aa).

His-22 and Arg-48 together coordinate substrate. Asp-214, Glu-241, and Glu-269 together coordinate Mg(2+). His-319 serves as the catalytic Proton acceptor. Glu-339 is a substrate binding site.

It belongs to the mandelate racemase/muconate lactonizing enzyme family. RhamD subfamily. Homooctamer; tetramer of dimers. Requires Mg(2+) as cofactor.

The catalysed reaction is L-rhamnonate = 2-dehydro-3-deoxy-L-rhamnonate + H2O. Functionally, catalyzes the dehydration of L-rhamnonate to 2-keto-3-deoxy-L-rhamnonate (KDR). The sequence is that of L-rhamnonate dehydratase from Verminephrobacter eiseniae (strain EF01-2).